The chain runs to 349 residues: ATP phosphoribosyltransferase regulatory subunit (349 aa).

Positions 327-349 are disordered; it reads GRGRGVRPRRASARGGRARARPR. The span at 330 to 349 shows a compositional bias: basic residues; the sequence is RGVRPRRASARGGRARARPR.

This sequence belongs to the class-II aminoacyl-tRNA synthetase family. HisZ subfamily. As to quaternary structure, heteromultimer composed of HisG and HisZ subunits.

Its subcellular location is the cytoplasm. It participates in amino-acid biosynthesis; L-histidine biosynthesis; L-histidine from 5-phospho-alpha-D-ribose 1-diphosphate: step 1/9. Its function is as follows. Required for the first step of histidine biosynthesis. May allow the feedback regulation of ATP phosphoribosyltransferase activity by histidine. The chain is ATP phosphoribosyltransferase regulatory subunit from Anaeromyxobacter sp. (strain K).